Here is a 258-residue protein sequence, read N- to C-terminus: Regulatory protein RecX (258 aa).

Belongs to the RecX family.

The protein localises to the cytoplasm. Functionally, modulates RecA activity. The chain is Regulatory protein RecX from Streptococcus mutans serotype c (strain ATCC 700610 / UA159).